An 806-amino-acid chain; its full sequence is Polyribonucleotide nucleotidyltransferase (806 aa).

Mg(2+) contacts are provided by Asp-488 and Asp-494. One can recognise a KH domain in the interval Pro-555 to Ile-614. One can recognise an S1 motif domain in the interval Gly-624–Lys-691. The disordered stretch occupies residues Arg-698–Gln-806. Residues Pro-704 to Gln-717 are compositionally biased toward low complexity. Over residues Gly-738–Glu-757 the composition is skewed to acidic residues. The span at Asn-758–Pro-774 shows a compositional bias: basic and acidic residues. A compositionally biased stretch (basic residues) spans Arg-783 to Gly-792. Residues Arg-793–Gln-806 are compositionally biased toward gly residues.

Belongs to the polyribonucleotide nucleotidyltransferase family. It depends on Mg(2+) as a cofactor.

The protein localises to the cytoplasm. The enzyme catalyses RNA(n+1) + phosphate = RNA(n) + a ribonucleoside 5'-diphosphate. In terms of biological role, involved in mRNA degradation. Catalyzes the phosphorolysis of single-stranded polyribonucleotides processively in the 3'- to 5'-direction. The chain is Polyribonucleotide nucleotidyltransferase from Acidobacterium capsulatum (strain ATCC 51196 / DSM 11244 / BCRC 80197 / JCM 7670 / NBRC 15755 / NCIMB 13165 / 161).